Consider the following 423-residue polypeptide: UPF0229 protein PSPTO_0546 (423 aa).

Residues 65–110 (HHGRGGKQTVVHPGNKEFTTGEHIARPQGGAGGKGPGKAGNSGEGM) form a disordered region. Over residues 93–107 (GGAGGKGPGKAGNSG) the composition is skewed to gly residues.

The protein belongs to the UPF0229 family.

This Pseudomonas syringae pv. tomato (strain ATCC BAA-871 / DC3000) protein is UPF0229 protein PSPTO_0546.